We begin with the raw amino-acid sequence, 259 residues long: Small ribosomal subunit protein uS2 (259 aa).

Residues 228–259 (VSFGSEEAEENNQKEDNEEIFEIEDVDESEEM) are disordered. Over residues 233 to 259 (EEAEENNQKEDNEEIFEIEDVDESEEM) the composition is skewed to acidic residues.

This sequence belongs to the universal ribosomal protein uS2 family.

The protein is Small ribosomal subunit protein uS2 of Thermosipho africanus (strain TCF52B).